We begin with the raw amino-acid sequence, 172 residues long: C-phycocyanin beta subunit (172 aa).

N72 bears the N4-methylasparagine mark. Residues C82 and C153 each coordinate (2R,3E)-phycocyanobilin.

The protein belongs to the phycobiliprotein family. The alpha and beta subunits exhibit high affinity for one another and form heterodimers. These heterodimers form heterohexamers of 3 alpha and 3 beta subunits which, in turn, aggregate into a heterododecamer consisting of 2 heterohexamers. Post-translationally, contains two covalently linked bilin chromophores.

The protein localises to the cellular thylakoid membrane. Light-harvesting photosynthetic bile pigment-protein from the phycobiliprotein complex (phycobilisome, PBS). Phycocyanin is the major phycobiliprotein in the PBS rod. This is C-phycocyanin beta subunit (cpcB) from Arthrospira platensis (Spirulina platensis).